The primary structure comprises 284 residues: 4-hydroxybenzoate octaprenyltransferase (284 aa).

A run of 9 helical transmembrane segments spans residues 19 to 39 (IPIL…SHGL), 42 to 62 (ISYL…GCII), 85 to 105 (GQLS…VAFI), 107 to 127 (VLFL…LAIL), 134 to 154 (FFAI…FMAF), 165 to 185 (AWIF…IYAL), 211 to 231 (ILLF…YCDF), 233 to 253 (SFFY…YFLY), and 261 to 281 (CINA…IAVI).

The protein belongs to the UbiA prenyltransferase family. Mg(2+) is required as a cofactor.

Its subcellular location is the cell inner membrane. It catalyses the reaction all-trans-octaprenyl diphosphate + 4-hydroxybenzoate = 4-hydroxy-3-(all-trans-octaprenyl)benzoate + diphosphate. It participates in cofactor biosynthesis; ubiquinone biosynthesis. Functionally, catalyzes the prenylation of para-hydroxybenzoate (PHB) with an all-trans polyprenyl group. Mediates the second step in the final reaction sequence of ubiquinone-8 (UQ-8) biosynthesis, which is the condensation of the polyisoprenoid side chain with PHB, generating the first membrane-bound Q intermediate 3-octaprenyl-4-hydroxybenzoate. This is 4-hydroxybenzoate octaprenyltransferase from Francisella tularensis subsp. tularensis (strain FSC 198).